A 148-amino-acid polypeptide reads, in one-letter code: Deoxyuridine 5'-triphosphate nucleotidohydrolase (148 aa).

Residues R67–G69, N80, L84–D86, and M94 each bind substrate.

Belongs to the dUTPase family. The cofactor is Mg(2+).

It carries out the reaction dUTP + H2O = dUMP + diphosphate + H(+). Its pathway is pyrimidine metabolism; dUMP biosynthesis; dUMP from dCTP (dUTP route): step 2/2. This enzyme is involved in nucleotide metabolism: it produces dUMP, the immediate precursor of thymidine nucleotides and it decreases the intracellular concentration of dUTP so that uracil cannot be incorporated into DNA. The sequence is that of Deoxyuridine 5'-triphosphate nucleotidohydrolase from Francisella philomiragia subsp. philomiragia (strain ATCC 25017 / CCUG 19701 / FSC 153 / O#319-036).